The following is a 203-amino-acid chain: High frequency lysogenization protein HflD homolog (203 aa).

Belongs to the HflD family.

It is found in the cytoplasm. Its subcellular location is the cell inner membrane. The protein is High frequency lysogenization protein HflD homolog of Dichelobacter nodosus (strain VCS1703A).